A 66-amino-acid chain; its full sequence is MLKNLKDLTLEDMKAKRLTLKKEYMDLRFKTVVGHVENPLKKRELRRDIARLNTIIHEYAIGIRKV.

Belongs to the universal ribosomal protein uL29 family.

This chain is Large ribosomal subunit protein uL29, found in Borrelia duttonii (strain Ly).